Reading from the N-terminus, the 398-residue chain is Lysophosphatidylserine lipase ABHD12 (398 aa).

At 1-74 (MRKRTEPVAL…RKGLWLRLRK (74 aa)) the chain is on the cytoplasmic side. A helical transmembrane segment spans residues 75–95 (ILFCVLGLYIAIPFLIKLCPG). Over 96-398 (IQAKLIFLNF…LGKSEPEHQH (303 aa)) the chain is Extracellular. Asn123 carries an N-linked (GlcNAc...) asparagine glycan. The Nucleophile role is filled by Ser246. Catalysis depends on charge relay system residues Asp333 and His372.

It belongs to the serine esterase family.

It is found in the endoplasmic reticulum membrane. It carries out the reaction 1-(9Z-octadecenoyl)-sn-glycero-3-phospho-L-serine + H2O = sn-glycero-3-phospho-L-serine + (9Z)-octadecenoate + H(+). The catalysed reaction is 1-(9Z-octadecenoyl)-sn-glycero-3-phospho-(1'-sn-glycerol) + H2O = sn-glycero-3-phospho-(1'-sn-glycerol) + (9Z)-octadecenoate + H(+). The enzyme catalyses 1-(9Z-octadecenoyl)-sn-glycero-3-phospho-(1D-myo-inositol) + H2O = sn-glycero-3-phospho-1D-myo-inositol + (9Z)-octadecenoate + H(+). It catalyses the reaction 1-(9Z-octadecenoyl)-sn-glycero-3-phosphoethanolamine + H2O = sn-glycero-3-phosphoethanolamine + (9Z)-octadecenoate + H(+). It carries out the reaction 1-(9Z-octadecenoyl)-sn-glycero-3-phosphocholine + H2O = 1-(9Z-octadecenoyl)-sn-glycerol + phosphocholine + H(+). The catalysed reaction is 2-(9Z-octadecenoyl)-glycerol + H2O = glycerol + (9Z)-octadecenoate + H(+). The enzyme catalyses 1-hexadecanoyl-sn-glycero-3-phospho-L-serine + H2O = sn-glycero-3-phospho-L-serine + hexadecanoate + H(+). It catalyses the reaction 2-(5Z,8Z,11Z,14Z-eicosatetraenoyl)-glycerol + H2O = glycerol + (5Z,8Z,11Z,14Z)-eicosatetraenoate + H(+). It carries out the reaction Hydrolyzes glycerol monoesters of long-chain fatty acids.. The catalysed reaction is 1-decanoylglycerol + H2O = decanoate + glycerol + H(+). The enzyme catalyses 1-dodecanoylglycerol + H2O = dodecanoate + glycerol + H(+). It catalyses the reaction 1-tetradecanoylglycerol + H2O = tetradecanoate + glycerol + H(+). It carries out the reaction 2-hexadecanoylglycerol + H2O = glycerol + hexadecanoate + H(+). The catalysed reaction is 1-(9Z-octadecenoyl)-glycerol + H2O = glycerol + (9Z)-octadecenoate + H(+). The enzyme catalyses 2-(9Z,12Z-octadecadienoyl)-glycerol + H2O = (9Z,12Z)-octadecadienoate + glycerol + H(+). It catalyses the reaction 1-(5Z,8Z,11Z,14Z-eicosatetraenoyl)-glycerol + H2O = glycerol + (5Z,8Z,11Z,14Z)-eicosatetraenoate + H(+). It carries out the reaction 1-(9Z,12Z-octadecadienoyl)-glycerol + H2O = (9Z,12Z)-octadecadienoate + glycerol + H(+). The catalysed reaction is 1-hexadecanoylglycerol + H2O = glycerol + hexadecanoate + H(+). The enzyme catalyses 1-octadecanoylglycerol + H2O = octadecanoate + glycerol + H(+). It catalyses the reaction 1-octadecanoyl-2-(9,10-epoxyoctadecanoyl)-sn-glycero-3-phospho-L-serine + H2O = 9,10-epoxyoctadecanoate + 1-octadecanoyl-sn-glycero-3-phosphoserine + H(+). It carries out the reaction 1-octadecanoyl-2-(10-hydroxyoctadecanoyl)-sn-glycero-3-phospho-L-serine + H2O = 1-octadecanoyl-sn-glycero-3-phosphoserine + 10-hydroxyoctadecanoate + H(+). The catalysed reaction is 1-hexadecanoyl-2-(10-hydroxyoctadecanoyl)-sn-glycero-3-phospho-L-serine + H2O = 10-hydroxyoctadecanoate + 1-hexadecanoyl-sn-glycero-3-phospho-L-serine + H(+). Its function is as follows. Lysophosphatidylserine (LPS) lipase that mediates the hydrolysis of lysophosphatidylserine, a class of signaling lipids that regulates immunological and neurological processes. Represents a major lysophosphatidylserine lipase in the brain, thereby playing a key role in the central nervous system. Also able to hydrolyze oxidized phosphatidylserine; oxidized phosphatidylserine is produced in response to severe inflammatory stress and constitutes a proapoptotic 'eat me' signal. Also has monoacylglycerol (MAG) lipase activity: hydrolyzes 2-arachidonoylglycerol (2-AG), thereby acting as a regulator of endocannabinoid signaling pathways. Has a strong preference for very-long-chain lipid substrates; substrate specificity is likely due to improved catalysis and not improved substrate binding. In Macaca fascicularis (Crab-eating macaque), this protein is Lysophosphatidylserine lipase ABHD12.